A 302-amino-acid polypeptide reads, in one-letter code: Glycine--tRNA ligase alpha subunit (302 aa).

This sequence belongs to the class-II aminoacyl-tRNA synthetase family. As to quaternary structure, tetramer of two alpha and two beta subunits.

The protein resides in the cytoplasm. The enzyme catalyses tRNA(Gly) + glycine + ATP = glycyl-tRNA(Gly) + AMP + diphosphate. The polypeptide is Glycine--tRNA ligase alpha subunit (Baumannia cicadellinicola subsp. Homalodisca coagulata).